Here is a 271-residue protein sequence, read N- to C-terminus: ATP synthase subunit a (271 aa).

A run of 5 helical transmembrane segments spans residues 38–58 (FWTL…LFLA), 100–120 (VIAP…LMDL), 146–166 (DVNI…FYSI), 211–231 (LFGN…LLPW), and 242–262 (AIFH…LTIV).

Belongs to the ATPase A chain family. As to quaternary structure, F-type ATPases have 2 components, CF(1) - the catalytic core - and CF(0) - the membrane proton channel. CF(1) has five subunits: alpha(3), beta(3), gamma(1), delta(1), epsilon(1). CF(0) has three main subunits: a(1), b(2) and c(9-12). The alpha and beta chains form an alternating ring which encloses part of the gamma chain. CF(1) is attached to CF(0) by a central stalk formed by the gamma and epsilon chains, while a peripheral stalk is formed by the delta and b chains.

The protein localises to the cell inner membrane. Its function is as follows. Key component of the proton channel; it plays a direct role in the translocation of protons across the membrane. The chain is ATP synthase subunit a from Klebsiella pneumoniae (strain 342).